Here is a 105-residue protein sequence, read N- to C-terminus: MAEWNGEYVSPYAEHGKKSEQVKKITVSIPLKVLKILTDERTRRQVNNLRHATNSELLCEAFLHAFTGQPLPNDEDLRKERSDEIPEAAKLLMRELGVDPDTWEY.

The protein belongs to the MetJ family. In terms of assembly, homodimer.

It localises to the cytoplasm. This regulatory protein, when combined with SAM (S-adenosylmethionine) represses the expression of the methionine regulon and of enzymes involved in SAM synthesis. The protein is Met repressor of Serratia proteamaculans (strain 568).